Here is a 375-residue protein sequence, read N- to C-terminus: Chaperone protein DnaJ (375 aa).

Residues 5 to 70 (DYYEVLGVER…GKRSAYDQYG (66 aa)) enclose the J domain. The CR-type zinc-finger motif lies at 134 to 212 (GTTVTIRVPT…CHGQGRVEES (79 aa)). Positions 147, 150, 164, 167, 186, 189, 200, and 203 each coordinate Zn(2+). CXXCXGXG motif repeat units follow at residues 147–154 (CKTCDGTG), 164–171 (CTTCGGIG), 186–193 (CPRCHGSG), and 200–207 (CGSCHGQG).

This sequence belongs to the DnaJ family. Homodimer. It depends on Zn(2+) as a cofactor.

The protein localises to the cytoplasm. Participates actively in the response to hyperosmotic and heat shock by preventing the aggregation of stress-denatured proteins and by disaggregating proteins, also in an autonomous, DnaK-independent fashion. Unfolded proteins bind initially to DnaJ; upon interaction with the DnaJ-bound protein, DnaK hydrolyzes its bound ATP, resulting in the formation of a stable complex. GrpE releases ADP from DnaK; ATP binding to DnaK triggers the release of the substrate protein, thus completing the reaction cycle. Several rounds of ATP-dependent interactions between DnaJ, DnaK and GrpE are required for fully efficient folding. Also involved, together with DnaK and GrpE, in the DNA replication of plasmids through activation of initiation proteins. The protein is Chaperone protein DnaJ of Ectopseudomonas mendocina (strain ymp) (Pseudomonas mendocina).